The following is a 166-amino-acid chain: Flagellar assembly factor FliW (166 aa).

This sequence belongs to the FliW family. In terms of assembly, interacts with translational regulator CsrA and flagellin(s).

It localises to the cytoplasm. Functionally, acts as an anti-CsrA protein, binds CsrA and prevents it from repressing translation of its target genes, one of which is flagellin. Binds to flagellin and participates in the assembly of the flagellum. The sequence is that of Flagellar assembly factor FliW from Desulfovibrio desulfuricans (strain ATCC 27774 / DSM 6949 / MB).